The primary structure comprises 316 residues: Ribosomal RNA large subunit methyltransferase F (316 aa).

It belongs to the methyltransferase superfamily. METTL16/RlmF family.

Its subcellular location is the cytoplasm. It catalyses the reaction adenosine(1618) in 23S rRNA + S-adenosyl-L-methionine = N(6)-methyladenosine(1618) in 23S rRNA + S-adenosyl-L-homocysteine + H(+). Its function is as follows. Specifically methylates the adenine in position 1618 of 23S rRNA. The sequence is that of Ribosomal RNA large subunit methyltransferase F from Pseudomonas putida (strain W619).